The primary structure comprises 130 residues: Glycine cleavage system H protein (130 aa).

Residues 28–110 (TVRIGITSVA…FGEGWLFEVE (83 aa)) enclose the Lipoyl-binding domain. K69 bears the N6-lipoyllysine mark.

Belongs to the GcvH family. In terms of assembly, the glycine cleavage system is composed of four proteins: P, T, L and H. (R)-lipoate is required as a cofactor.

Functionally, the glycine cleavage system catalyzes the degradation of glycine. The H protein shuttles the methylamine group of glycine from the P protein to the T protein. The protein is Glycine cleavage system H protein of Corynebacterium aurimucosum (strain ATCC 700975 / DSM 44827 / CIP 107346 / CN-1) (Corynebacterium nigricans).